Here is a 94-residue protein sequence, read N- to C-terminus: Small ribosomal subunit protein uS19 (94 aa).

This sequence belongs to the universal ribosomal protein uS19 family.

Functionally, protein S19 forms a complex with S13 that binds strongly to the 16S ribosomal RNA. The chain is Small ribosomal subunit protein uS19 from Hamiltonella defensa subsp. Acyrthosiphon pisum (strain 5AT).